Reading from the N-terminus, the 228-residue chain is L-ribulose-5-phosphate 4-epimerase UlaF (228 aa).

Substrate contacts are provided by residues 26–27, 43–44, and 72–73; these read GN, SG, and SS. Aspartate 74, histidine 93, and histidine 95 together coordinate Zn(2+). Residue aspartate 118 is the Proton donor/acceptor of the active site. Histidine 167 is a Zn(2+) binding site. The active-site Proton donor/acceptor is the tyrosine 225.

The protein belongs to the aldolase class II family. AraD/FucA subfamily. Zn(2+) serves as cofactor.

It catalyses the reaction L-ribulose 5-phosphate = D-xylulose 5-phosphate. Its pathway is cofactor degradation; L-ascorbate degradation; D-xylulose 5-phosphate from L-ascorbate: step 4/4. In terms of biological role, catalyzes the isomerization of L-ribulose 5-phosphate to D-xylulose 5-phosphate. Is involved in the anaerobic L-ascorbate utilization. This Shigella flexneri protein is L-ribulose-5-phosphate 4-epimerase UlaF.